The primary structure comprises 870 residues: Protein translocase subunit SecA (870 aa).

ATP is bound by residues Gln-86, 104–108 (GEGKT), and Asp-499. Zn(2+) is bound by residues Cys-854, Cys-856, Cys-865, and His-866.

It belongs to the SecA family. In terms of assembly, monomer and homodimer. Part of the essential Sec protein translocation apparatus which comprises SecA, SecYEG and auxiliary proteins SecDF-YajC and YidC. It depends on Zn(2+) as a cofactor.

It is found in the cell inner membrane. The protein localises to the cytoplasm. It carries out the reaction ATP + H2O + cellular proteinSide 1 = ADP + phosphate + cellular proteinSide 2.. Part of the Sec protein translocase complex. Interacts with the SecYEG preprotein conducting channel. Has a central role in coupling the hydrolysis of ATP to the transfer of proteins into and across the cell membrane, serving both as a receptor for the preprotein-SecB complex and as an ATP-driven molecular motor driving the stepwise translocation of polypeptide chains across the membrane. The chain is Protein translocase subunit SecA from Ehrlichia ruminantium (strain Welgevonden).